Here is a 367-residue protein sequence, read N- to C-terminus: Phosphoribosylaminoimidazole-succinocarboxamide synthase (367 aa).

It belongs to the SAICAR synthetase family.

It catalyses the reaction 5-amino-1-(5-phospho-D-ribosyl)imidazole-4-carboxylate + L-aspartate + ATP = (2S)-2-[5-amino-1-(5-phospho-beta-D-ribosyl)imidazole-4-carboxamido]succinate + ADP + phosphate + 2 H(+). Its pathway is purine metabolism; IMP biosynthesis via de novo pathway; 5-amino-1-(5-phospho-D-ribosyl)imidazole-4-carboxamide from 5-amino-1-(5-phospho-D-ribosyl)imidazole-4-carboxylate: step 1/2. The polypeptide is Phosphoribosylaminoimidazole-succinocarboxamide synthase (Shewanella baltica (strain OS195)).